Consider the following 119-residue polypeptide: MQEILLKSKIHMAKVTDKSINYMGSIGIDVELLEKSNIKPYELVLVADVNNGQRFVTYTIPEEKGSRKIVVNGAAARLVEQGDRVIIMAFGMYENDEYKGPRVLIMNEDNEVVEIREGT.

Ser25 functions as the Schiff-base intermediate with substrate; via pyruvic acid in the catalytic mechanism. Ser25 carries the post-translational modification Pyruvic acid (Ser). Position 57 (Thr57) interacts with substrate. Tyr58 functions as the Proton donor in the catalytic mechanism. Substrate is bound at residue 73–75 (GAA).

Belongs to the PanD family. As to quaternary structure, heterooctamer of four alpha and four beta subunits. Requires pyruvate as cofactor. Is synthesized initially as an inactive proenzyme, which is activated by self-cleavage at a specific serine bond to produce a beta-subunit with a hydroxyl group at its C-terminus and an alpha-subunit with a pyruvoyl group at its N-terminus.

Its subcellular location is the cytoplasm. The enzyme catalyses L-aspartate + H(+) = beta-alanine + CO2. It participates in cofactor biosynthesis; (R)-pantothenate biosynthesis; beta-alanine from L-aspartate: step 1/1. In terms of biological role, catalyzes the pyruvoyl-dependent decarboxylation of aspartate to produce beta-alanine. The sequence is that of Aspartate 1-decarboxylase from Thermosipho melanesiensis (strain DSM 12029 / CIP 104789 / BI429).